The following is a 435-amino-acid chain: Glutamate-1-semialdehyde 2,1-aminomutase (435 aa).

An N6-(pyridoxal phosphate)lysine modification is found at Lys-266.

This sequence belongs to the class-III pyridoxal-phosphate-dependent aminotransferase family. HemL subfamily. In terms of assembly, homodimer. Requires pyridoxal 5'-phosphate as cofactor.

Its subcellular location is the cytoplasm. It carries out the reaction (S)-4-amino-5-oxopentanoate = 5-aminolevulinate. Its pathway is porphyrin-containing compound metabolism; protoporphyrin-IX biosynthesis; 5-aminolevulinate from L-glutamyl-tRNA(Glu): step 2/2. This Helicobacter hepaticus (strain ATCC 51449 / 3B1) protein is Glutamate-1-semialdehyde 2,1-aminomutase.